The following is a 376-amino-acid chain: N-acetyldiaminopimelate deacetylase (376 aa).

Asp-69 is an active-site residue. The active-site Proton acceptor is Glu-128.

Belongs to the peptidase M20A family. N-acetyldiaminopimelate deacetylase subfamily.

The enzyme catalyses N-acetyl-(2S,6S)-2,6-diaminopimelate + H2O = (2S,6S)-2,6-diaminopimelate + acetate. Its pathway is amino-acid biosynthesis; L-lysine biosynthesis via DAP pathway; LL-2,6-diaminopimelate from (S)-tetrahydrodipicolinate (acetylase route): step 3/3. Catalyzes the conversion of N-acetyl-diaminopimelate to diaminopimelate and acetate. The polypeptide is N-acetyldiaminopimelate deacetylase (Bacillus anthracis (strain A0248)).